A 406-amino-acid chain; its full sequence is Tryptophan 2,3-dioxygenase (406 aa).

Substrate-binding positions include 72 to 76 (FIITH) and arginine 144. Heme is bound at residue histidine 328. Residue threonine 342 coordinates substrate.

Belongs to the tryptophan 2,3-dioxygenase family. As to quaternary structure, homotetramer. Dimer of dimers. Requires heme as cofactor.

It catalyses the reaction L-tryptophan + O2 = N-formyl-L-kynurenine. It participates in amino-acid degradation; L-tryptophan degradation via kynurenine pathway; L-kynurenine from L-tryptophan: step 1/2. Its function is as follows. Heme-dependent dioxygenase that catalyzes the oxidative cleavage of the L-tryptophan (L-Trp) pyrrole ring and converts L-tryptophan to N-formyl-L-kynurenine. Catalyzes the oxidative cleavage of the indole moiety. The sequence is that of Tryptophan 2,3-dioxygenase from Homo sapiens (Human).